Here is a 314-residue protein sequence, read N- to C-terminus: Ribonucleoside-diphosphate reductase small subunit (314 aa).

Residues Asp73, Glu103, and His106 each contribute to the Fe cation site. Residue Tyr110 is part of the active site. Residues Val160–Leu180 traverse the membrane as a helical segment. Positions 166, 200, and 203 each coordinate Fe cation.

The protein belongs to the ribonucleoside diphosphate reductase small chain family. In terms of assembly, heterotetramer composed of a homodimer of the large subunit (R1) and a homodimer of the small subunit (R2). Larger multisubunit protein complex are also active, composed of (R1)n(R2)n. It depends on Fe cation as a cofactor.

It localises to the host membrane. It catalyses the reaction a 2'-deoxyribonucleoside 5'-diphosphate + [thioredoxin]-disulfide + H2O = a ribonucleoside 5'-diphosphate + [thioredoxin]-dithiol. Functionally, ribonucleoside-diphosphate reductase holoenzyme provides the precursors necessary for viral DNA synthesis. Allows virus growth in non-dividing cells, as well as reactivation from latency in infected hosts. Catalyzes the biosynthesis of deoxyribonucleotides from the corresponding ribonucleotides. This Bovine herpesvirus 1.1 (strain Cooper) (BoHV-1) protein is Ribonucleoside-diphosphate reductase small subunit.